We begin with the raw amino-acid sequence, 124 residues long: Small ribosomal subunit protein uS12 (124 aa).

Position 89 is a 3-methylthioaspartic acid (Asp89).

It belongs to the universal ribosomal protein uS12 family. Part of the 30S ribosomal subunit. Contacts proteins S8 and S17. May interact with IF1 in the 30S initiation complex.

Its function is as follows. With S4 and S5 plays an important role in translational accuracy. In terms of biological role, interacts with and stabilizes bases of the 16S rRNA that are involved in tRNA selection in the A site and with the mRNA backbone. Located at the interface of the 30S and 50S subunits, it traverses the body of the 30S subunit contacting proteins on the other side and probably holding the rRNA structure together. The combined cluster of proteins S8, S12 and S17 appears to hold together the shoulder and platform of the 30S subunit. The chain is Small ribosomal subunit protein uS12 from Vibrio vulnificus (strain CMCP6).